Consider the following 463-residue polypeptide: ATP synthase subunit beta (463 aa).

152–159 serves as a coordination point for ATP; sequence GGAGVGKT.

Belongs to the ATPase alpha/beta chains family. F-type ATPases have 2 components, CF(1) - the catalytic core - and CF(0) - the membrane proton channel. CF(1) has five subunits: alpha(3), beta(3), gamma(1), delta(1), epsilon(1). CF(0) has three main subunits: a(1), b(2) and c(9-12). The alpha and beta chains form an alternating ring which encloses part of the gamma chain. CF(1) is attached to CF(0) by a central stalk formed by the gamma and epsilon chains, while a peripheral stalk is formed by the delta and b chains.

It localises to the cell inner membrane. It catalyses the reaction ATP + H2O + 4 H(+)(in) = ADP + phosphate + 5 H(+)(out). Produces ATP from ADP in the presence of a proton gradient across the membrane. The catalytic sites are hosted primarily by the beta subunits. This chain is ATP synthase subunit beta, found in Shewanella sp. (strain MR-7).